Here is a 101-residue protein sequence, read N- to C-terminus: Putative septation protein SpoVG (101 aa).

The disordered stretch occupies residues 82 to 101 (ELKKGGAAPARATGTDPHED).

The protein belongs to the SpoVG family.

In terms of biological role, could be involved in septation. The polypeptide is Putative septation protein SpoVG (Anaeromyxobacter dehalogenans (strain 2CP-1 / ATCC BAA-258)).